Here is a 732-residue protein sequence, read N- to C-terminus: Polyadenylate-binding protein, cytoplasmic and nuclear (732 aa).

Polar residues predominate over residues 1 to 19 (MSAETSTTPAPAENTNGTP). The interval 1–26 (MSAETSTTPAPAENTNGTPDNAPAPE) is disordered. RRM domains follow at residues 42–120 (ASLY…WSQR), 130–207 (GNVF…HHIS), 223–300 (TNIY…RAQK), and 326–454 (VNLY…LAQR). Disordered stretches follow at residues 357–413 (VMRD…KKPL) and 706–732 (MKNK…ENKA). Residues 371 to 412 (SETKESANKENEKAAEGEKEPAAEEKEKEEKKEAEQKPEKKP) are compositionally biased toward basic and acidic residues. A PABC domain is found at 630–707 (VGVLTAQALS…ALSVYDEYMK (78 aa)).

Belongs to the polyadenylate-binding protein type-1 family.

Its subcellular location is the cytoplasm. The protein resides in the nucleus. Its function is as follows. Binds the poly(A) tail of mRNA. Appears to be an important mediator of the multiple roles of the poly(A) tail in mRNA biogenesis, stability and translation. In the nucleus, involved in both mRNA cleavage and polyadenylation. Is also required for efficient mRNA export to the cytoplasm. Acts in concert with a poly(A)-specific nuclease (PAN) to affect poly(A) tail shortening, which may occur concomitantly with either nucleocytoplasmic mRNA transport or translational initiation. In the cytoplasm, stimulates translation initiation and regulates mRNA decay through translation termination-coupled poly(A) shortening, probably mediated by PAN. The protein is Polyadenylate-binding protein, cytoplasmic and nuclear (pab1) of Emericella nidulans (strain FGSC A4 / ATCC 38163 / CBS 112.46 / NRRL 194 / M139) (Aspergillus nidulans).